Reading from the N-terminus, the 878-residue chain is Phosphoenolpyruvate carboxylase (878 aa).

Residues His-137 and Lys-545 contribute to the active site.

It belongs to the PEPCase type 1 family. Requires Mg(2+) as cofactor.

The catalysed reaction is oxaloacetate + phosphate = phosphoenolpyruvate + hydrogencarbonate. Functionally, forms oxaloacetate, a four-carbon dicarboxylic acid source for the tricarboxylic acid cycle. This chain is Phosphoenolpyruvate carboxylase, found in Yersinia pestis bv. Antiqua (strain Antiqua).